Here is a 277-residue protein sequence, read N- to C-terminus: Small ribosomal subunit protein uS2 (277 aa).

Residues leucine 247–asparagine 277 form a disordered region. The segment covering serine 253 to glutamate 264 has biased composition (acidic residues). The segment covering glutamate 265–asparagine 277 has biased composition (basic and acidic residues).

It belongs to the universal ribosomal protein uS2 family.

This is Small ribosomal subunit protein uS2 (rpsB) from Chlamydia pneumoniae (Chlamydophila pneumoniae).